We begin with the raw amino-acid sequence, 279 residues long: Fructose-1,6-bisphosphatase class 1 (279 aa).

Residues Glu65, Asp85, Leu87, and Asp88 each coordinate Mg(2+). Residues Asp88–Ser91, Tyr190, and Lys221 contribute to the substrate site. A Mg(2+)-binding site is contributed by Glu227.

This sequence belongs to the FBPase class 1 family. In terms of assembly, homotetramer. Mg(2+) serves as cofactor.

The protein resides in the cytoplasm. The enzyme catalyses beta-D-fructose 1,6-bisphosphate + H2O = beta-D-fructose 6-phosphate + phosphate. It functions in the pathway carbohydrate biosynthesis; gluconeogenesis. This chain is Fructose-1,6-bisphosphatase class 1, found in Helicobacter hepaticus (strain ATCC 51449 / 3B1).